A 350-amino-acid chain; its full sequence is Transmembrane protein 185B (350 aa).

7 consecutive transmembrane segments (helical) span residues 16–36 (LIYA…DGVI), 41–61 (WAVF…ASVG), 81–101 (FKAM…EVLV), 111–131 (FWLL…AACV), 168–188 (WLVV…VVLY), 211–231 (VTMA…EVLL), and 240–260 (MFSY…LMAT).

It belongs to the TMEM185 family.

Its subcellular location is the membrane. In Bos taurus (Bovine), this protein is Transmembrane protein 185B (TMEM185B).